Reading from the N-terminus, the 1339-residue chain is Receptor tyrosine-protein kinase erbB-3 (1339 aa).

The first 19 residues, 1–19, serve as a signal peptide directing secretion; the sequence is MRATGTLQVLCFLLSLARG. Residues 20-643 lie on the Extracellular side of the membrane; that stretch reads SEMGNSQAVC…EVLMSKPHLV (624 aa). The N-linked (GlcNAc...) asparagine glycan is linked to N126. 11 disulfide bridges follow: C186/C194, C190/C202, C210/C218, C214/C226, C227/C235, C231/C243, C246/C255, C259/C286, C290/C301, C305/C320, and C323/C327. An N-linked (GlcNAc...) asparagine glycan is attached at N250. N-linked (GlcNAc...) asparagine glycosylation is found at N353, N408, N414, N437, and N469. 10 cysteine pairs are disulfide-bonded: C500/C509, C504/C517, C520/C529, C533/C549, C552/C565, C556/C573, C576/C585, C589/C610, C613/C621, and C617/C629. N522 carries an N-linked (GlcNAc...) asparagine glycan. N566 is a glycosylation site (N-linked (GlcNAc...) asparagine). An N-linked (GlcNAc...) asparagine glycan is attached at N616. A helical membrane pass occupies residues 644–662; sequence IAVTVGLAVILMILGGSFL. Residues 663-1339 are Cytoplasmic-facing; sequence YWRGRRIQNK…LFPKANAQRT (677 aa). S684 carries the post-translational modification Phosphoserine. The region spanning 707–964 is the Protein kinase domain; sequence LRKLKVLGSG…TFKELANEFT (258 aa). ATP contacts are provided by residues 713 to 721, K740, 786 to 788, and 832 to 837; these read LGSGVFGTV, QYL, and DLALRN. D832 acts as the Proton acceptor in catalysis. S980 bears the Phosphoserine mark. A compositionally biased stretch (low complexity) spans 1023–1036; the sequence is SLGSALSLPTGTLT. Disordered regions lie at residues 1023 to 1052 and 1078 to 1215; these read SLGS…SGYM and PISL…GSLE. Polar residues predominate over residues 1039-1052; that stretch reads RGSQSLLSPSSGYM. Low complexity predominate over residues 1172-1184; that stretch reads GTLSSVGLSSVLG. Over residues 1185-1195 the composition is skewed to acidic residues; that stretch reads TEEEDEDEEYE.

This sequence belongs to the protein kinase superfamily. Tyr protein kinase family. EGF receptor subfamily. In terms of assembly, monomer and homodimer. Heterodimer with each of the other ERBB receptors (Potential). Interacts with CSPG5, PA2G4, GRB7, MYOC and MUC1. Found in a ternary complex with NRG1 and ITGAV:ITGB3 or ITGA6:ITGB4. Autophosphorylated. Ligand-binding increases phosphorylation on tyrosine residues and promotes its association with the p85 subunit of phosphatidylinositol 3-kinase.

It is found in the membrane. The catalysed reaction is L-tyrosyl-[protein] + ATP = O-phospho-L-tyrosyl-[protein] + ADP + H(+). Its function is as follows. Tyrosine-protein kinase that plays an essential role as cell surface receptor for neuregulins. Binds to neuregulin-1 (NRG1) and is activated by it; ligand-binding increases phosphorylation on tyrosine residues and promotes its association with the p85 subunit of phosphatidylinositol 3-kinase. May also be activated by CSPG5. Involved in the regulation of myeloid cell differentiation. The polypeptide is Receptor tyrosine-protein kinase erbB-3 (Erbb3) (Rattus norvegicus (Rat)).